We begin with the raw amino-acid sequence, 389 residues long: Galactose-1-phosphate uridylyltransferase (389 aa).

This sequence belongs to the galactose-1-phosphate uridylyltransferase type 2 family.

Its subcellular location is the cytoplasm. The enzyme catalyses alpha-D-galactose 1-phosphate + UDP-alpha-D-glucose = alpha-D-glucose 1-phosphate + UDP-alpha-D-galactose. It functions in the pathway carbohydrate metabolism; galactose metabolism. This chain is Galactose-1-phosphate uridylyltransferase (galT), found in Butyrivibrio fibrisolvens.